Consider the following 4903-residue polypeptide: Histone-lysine N-methyltransferase 2C (4903 aa).

Disordered regions lie at residues 1-116 and 159-202; these read MSSE…SEES and LTLP…PPQQ. Positions 13–28 are enriched in pro residues; the sequence is QPPPAPPEEPGAPAPS. Ser28 and Ser46 each carry phosphoserine. The a.T hook DNA-binding region spans 34–46; the sequence is KRPRGRPRKDGAS. Residues 50-59 show a composition bias toward basic residues; it reads RARKKPRSRG. A compositionally biased stretch (acidic residues) spans 64 to 81; the sequence is EDEDSMDGLETTETENIV. Ser89 and Ser113 each carry phosphoserine. Residues 101–116 show a composition bias toward polar residues; that stretch reads SKQPVSALQRSVSEES. The C2HC pre-PHD-type 1; degenerate zinc finger occupies 226–261; sequence ELSLVGLPDAIDVQALFDSTGTCWAHHRCVEWSLGI. PHD-type zinc fingers lie at residues 282 to 330, 340 to 390, 387 to 437, and 463 to 519; these read ERCA…PEHI, DANC…CKVC, CKVC…CRIC, and DNLC…CKHL. Residues 343 to 388 form an RING-type zinc finger; it reads CAVCDSPGDLLDQFFCTTCGQHYHGMCLDIAVTPLKRAGWQCPECK. The region spanning 435–488 is the DHHC domain; sequence RICIECGTRSSTQWHHNCLICDTCYQQQDNLCPFCGKCYHPELQKDMLHCNMCK. The tract at residues 671–703 is disordered; that stretch reads SEVASKELSPPKSAPETAAPEALLSPHSERSLS. Lys751 is modified (N6-acetyllysine). Residues 824–835 are compositionally biased toward basic residues; the sequence is TKRKFSPGRPRS. 2 disordered regions span residues 824–857 and 882–904; these read TKRK…DTSE and GFPG…GRSK. A compositionally biased stretch (polar residues) spans 838 to 848; sequence GAWSNHNTVSP. The residue at position 847 (Ser847) is a Phosphoserine. 3 PHD-type zinc fingers span residues 950–1003, 1000–1050, and 1077–1132; these read QDMC…CTVC, CTVC…CVWC, and LSSC…CRPY. The disordered stretch occupies residues 1208 to 1318; sequence AVLQTPPDIQ…PSRDDGWREQ (111 aa). Residues 1217–1263 are compositionally biased toward basic and acidic residues; that stretch reads QSEHSRDGEMDDSREGELMDCDGKSESSPEREAGDDETKGIEGTDAI. Ser1294 carries the post-translational modification Phosphoserine. A compositionally biased stretch (basic and acidic residues) spans 1309–1318; it reads PSRDDGWREQ. Residues 1330-1352 adopt a coiled-coil conformation; sequence VAENTDKIKKRYRKRKNKLEETF. Disordered stretches follow at residues 1397-1419 and 1447-1473; these read SDPL…ADDP and HSDI…RPLT. Polar residues-rich tracts occupy residues 1406–1415 and 1455–1471; these read TSAKPGTQGT and ADAS…SSRP. The residue at position 1497 (Lys1497) is an N6-acetyllysine. 2 disordered regions span residues 1594–1617 and 1698–1757; these read NAIA…ENDT and VQMS…AKIE. Positions 1599–1617 are enriched in polar residues; that stretch reads DPNSSWAPTTPSMEGENDT. Low complexity predominate over residues 1707 to 1717; sequence RQQQQDSIDPS. A compositionally biased stretch (basic and acidic residues) spans 1718-1742; it reads SRIDSDLFKDPLKQRESEHEQEWKF. The stretch at 1743–1790 forms a coiled coil; the sequence is RQQMRQKSKQQAKIEATQKLEQVKNEQQQQQQQQQQQQQQQLASQHLL. N6-acetyllysine is present on Lys1761. Positions 1791–2375 are disordered; that stretch reads VAPGSDTPSS…MSQADTEKLR (585 aa). The span at 1796–1819 shows a compositional bias: polar residues; sequence DTPSSGAQSPLTPQAGNGNVSPAQ. Positions 1855-1886 are enriched in low complexity; it reads PSRIPVQESLSQSQNSQPPSPQMFSPGSSHSR. Ser1983 carries the phosphoserine modification. Polar residues predominate over residues 1986–2001; the sequence is ISEQSTKGPLTTGTSD. Residue Lys2005 is modified to N6-acetyllysine. Composition is skewed to polar residues over residues 2113–2124, 2137–2151, and 2325–2334; these read GTISRSASQDPY, SYSQ…NPDP, and GNFSTSSNLP. A compositionally biased stretch (low complexity) spans 2335-2347; the sequence is VSSQGQQFSSVSQ. Residues 2355-2369 are compositionally biased toward polar residues; it reads SGGTDTQNTVNMSQA. Arg2447 and Arg2563 each carry asymmetric dimethylarginine. Disordered stretches follow at residues 2561-2668, 2702-2736, and 2786-2844; these read RSRL…DNLE, KDLD…NDPN, and VEPK…GDAD. Composition is skewed to polar residues over residues 2602-2611, 2621-2636, and 2653-2668; these read QPSQCLSNQL, PPSQ…QSSI, and PLST…DNLE. Over residues 2788-2807 the composition is skewed to basic and acidic residues; the sequence is PKTRDQGDKTMVLEDKDLPQ. Lys2796 and Lys2803 each carry N6-acetyllysine. Residue Ser2822 is modified to Phosphoserine. At Tyr2824 the chain carries Phosphotyrosine. Positions 2825 to 2843 are enriched in basic and acidic residues; sequence SKEEIQSEIKNHDDSRGDA. Residues Lys2826 and Lys2862 each carry the N6-acetyllysine modification. Residues 2920-2953 are disordered; it reads EKCDDSDIRPSGSSPPSLPISPSTHGSSLPPTLI. Residues 2929-2942 are compositionally biased toward low complexity; the sequence is PSGSSPPSLPISPS. Coiled coils occupy residues 3047–3074 and 3166–3193; these read LLQD…QRSE and NDSQ…YLEE. Positions 3198–3214 are enriched in basic residues; it reads HRKSKKALSAKQRTAKK. Residues 3198 to 3223 are disordered; it reads HRKSKKALSAKQRTAKKAGREFPEED. Coiled coils occupy residues 3224 to 3270 and 3387 to 3432; these read AEQL…QQCA and FSES…QHCL. Disordered regions lie at residues 3329–3407 and 3444–3910; these read PGWQ…QERQ and SQMP…QKMA. The segment covering 3391-3407 has biased composition (basic and acidic residues); sequence FQERERKERLREQQERQ. The span at 3464–3485 shows a compositional bias: low complexity; it reads LQQSPQHQQQIGPVLQQQNVQQ. Polar residues-rich tracts occupy residues 3486–3503, 3515–3524, 3557–3586, and 3632–3647; these read GSVN…NEQR, PSASGGSPNF, PVAN…SLIQ, and LSET…PSEL. Basic and acidic residues-rich tracts occupy residues 3697–3739 and 3795–3804; these read AEAD…KIKD and SSTKDGKLIE. Residue Lys3709 is modified to N6-acetyllysine. The span at 3871 to 3885 shows a compositional bias: polar residues; it reads MYSSSDSFTHLKQQN. The segment covering 3890-3904 has biased composition (pro residues); it reads PPTPPASLPPTPPPM. Ser4027 carries the post-translational modification Phosphoserine. Arg4132 is subject to Asymmetric dimethylarginine. The tract at residues 4159-4184 is disordered; the sequence is PNVPFPPTSNGLSGYKDSSHGPAEGA. A Phosphoserine modification is found at Ser4260. A C2HC pre-PHD-type 2 zinc finger spans residues 4391–4431; that stretch reads CRKCCFCHEEGDGLTDGPARLLNLDLDLWVHLNCALWSTEV. The PHD-type 8 zinc-finger motif lies at 4452–4499; it reads MKCVFCHKTGATSGCHRFRCTNIYHFTCATKAQCMFFKDKTMLCPMHK. Positions 4537–4597 constitute an FYR N-terminal domain; the sequence is DHTFRVGSLI…CRYLCSIEEK (61 aa). The region spanning 4598–4683 is the FYR C-terminal domain; it reads DGRPVFVIRI…EACENYTFRY (86 aa). Residues 4699 to 4704 carry the WDR5 interaction motif (WIN) motif; sequence GCARSE. One can recognise an SET domain in the interval 4763 to 4879; it reads SNVYLARSRI…KGEELCYDYK (117 aa). Residues Tyr4817 and 4840-4841 contribute to the S-adenosyl-L-methionine site; that span reads NH. Residues Cys4843, Cys4891, Cys4893, and Cys4898 each coordinate Zn(2+). The Post-SET domain occupies 4887 to 4903; it reads HKIPCHCGAVNCRKWMN.

This sequence belongs to the class V-like SAM-binding methyltransferase superfamily. Histone-lysine methyltransferase family. TRX/MLL subfamily. As to quaternary structure, component of the MLL3 complex (also named ASCOM complex), at least composed of catalytic subunit KMT2C/MLL3, ASH2L, RBBP5, WDR5, NCOA6, DPY30, KDM6A, PAXIP1/PTIP, PAGR1 and alpha- and beta-tubulin. Forms a core complex with the evolutionary conserved subcomplex WRAD composed of WDR5, RBBP5, ASH2L/ASH2 and DPY30 subunits; WRAD differentially stimulates the methyltransferase activity. Interacts (via WIN motif) with WDR5. In adult, detected in testis, kidney, spleen and lung, weakly expressed in brain and absent in heart and liver. First detected throughout the embryo at 8 dpc when expression is strong in forebrain neuroepithelium and absent in heart. Expressed in the eye lens between 10 and 14.5 dpc. By 13 dpc, expressed strongly in spinal cord, hand/foot plates and gonads.

It is found in the nucleus. It carries out the reaction L-lysyl(4)-[histone H3] + S-adenosyl-L-methionine = N(6)-methyl-L-lysyl(4)-[histone H3] + S-adenosyl-L-homocysteine + H(+). Histone methyltransferase that catalyzes methyl group transfer from S-adenosyl-L-methionine to the epsilon-amino group of 'Lys-4' of histone H3 (H3K4). Part of chromatin remodeling machinery predominantly forms H3K4me1 methylation marks at active chromatin sites where transcription and DNA repair take place. Likely plays a redundant role with KMT2D in enriching H3K4me1 mark on primed and active enhancer elements. This chain is Histone-lysine N-methyltransferase 2C (Kmt2c), found in Mus musculus (Mouse).